The sequence spans 2828 residues: Matrix-remodeling-associated protein 5 (2828 aa).

The signal sequence occupies residues 1 to 26 (MPKRAHWGALSVVLILLWGHPRVALA). Residues 27-55 (CPHPCACYVPSEVHCTFRSLASVPAGIAK) form the LRRNT domain. LRR repeat units follow at residues 56-77 (HVERINLGFNSIQALSETSFAG), 80-101 (KLELLMIHGNEIPSIPDGALRD), 104-125 (SLQVFKFSYNKLRVITGQTLQG), 128-149 (NLMRLHIDHNKIEFIHPQAFNG), 152-173 (SLRLLHLEGNLLHQLHPSTFST), and 184-205 (TIRHLYLAENMVRTLPASMLRN). Residues 217–277 (NPWTCDCEMR…HKLKDMTCLK (61 aa)) form the LRRCT domain. Residues Asn-287 and Asn-321 are each glycosylated (N-linked (GlcNAc...) asparagine). Ig-like C2-type domains lie at 481-571 (PSGA…YRVL) and 575-669 (PSTQ…ITVT). 2 cysteine pairs are disulfide-bonded: Cys-501/Cys-555 and Cys-599/Cys-651. N-linked (GlcNAc...) asparagine glycosylation is present at Asn-633. 5 disordered regions span residues 671 to 715 (KGSG…RRLL), 933 to 962 (KPTHEETATEGWSAADVGSSPEPTSSEYEP), 1068 to 1190 (QGGN…APDI), 1204 to 1275 (AWVD…SSET), and 1367 to 1389 (EESSPVGFPGTPTWNPSRTAQPG). The segment covering 695–708 (IVEDEGGSGMGDEE) has biased composition (acidic residues). O-linked (Xyl...) (chondroitin sulfate) serine glycosylation occurs at Ser-702. Residues 951 to 962 (SSPEPTSSEYEP) show a composition bias toward low complexity. Residues 1090-1107 (SKSITLPDSTLGIMSSMS) are compositionally biased toward polar residues. A compositionally biased stretch (basic residues) spans 1146 to 1168 (PSRRRPNGRRRLRPNKFRHRHKQ). Polar residues-rich tracts occupy residues 1169-1190 (TPPTTFAPSETFSTQPTQAPDI) and 1204-1214 (AWVDNTVNTPK). The segment covering 1229 to 1243 (TPRRKHGKRPNKHRY) has biased composition (basic residues). The N-linked (GlcNAc...) asparagine glycan is linked to Asn-1403. One copy of the LRR 7 repeat lies at 1410 to 1434 (LKELEDVDFTSEFLSSLTVSTPFHQ). 5 disordered regions span residues 1479 to 1499 (QNHTPTAARMKEPASSSPSTI), 1536 to 1566 (NPETEATPVNNEGTQHMSGPNELSTPSSDQD), 1579 to 1603 (QVFGSRSLPRGPDSQRQDGRVHASH), 1669 to 1689 (STTIPLPLHMSKPSIPSKFTD), and 1700 to 1719 (KVFGNNNIPEARNPVGKPPS). Over residues 1542–1566 (TPVNNEGTQHMSGPNELSTPSSDQD) the composition is skewed to polar residues. A glycan (N-linked (GlcNAc...) asparagine) is linked at Asn-1735. Ig-like C2-type domains lie at 1853 to 1946 (PQIL…LSVT), 1950 to 2041 (PQIL…IRLH), 2046 to 2140 (PPVI…LNVQ), 2146 to 2239 (ARIT…VDVV), 2242 to 2343 (PAKI…KVVT), 2345 to 2432 (PATI…KTVW), 2440 to 2534 (PKIN…LQLT), 2542 to 2630 (PIFH…RLVS), 2637 to 2722 (PEAN…PSVT), and 2733 to 2828 (PRIT…IHVF). 2 disulfide bridges follow: Cys-1875/Cys-1928 and Cys-1972/Cys-2025. Asn-2007 and Asn-2056 each carry an N-linked (GlcNAc...) asparagine glycan. Cystine bridges form between Cys-2069/Cys-2122, Cys-2168/Cys-2221, Cys-2265/Cys-2324, Cys-2368/Cys-2418, Cys-2466/Cys-2518, Cys-2564/Cys-2616, Cys-2659/Cys-2711, and Cys-2755/Cys-2810. The N-linked (GlcNAc...) asparagine glycan is linked to Asn-2693.

In terms of tissue distribution, detected in placenta (at protein level). Detected in cerebrospinal fluid and fibroblasts (at protein level). Highly expressed in kidney, also detected on liver and spleen. Expressed by proximal tubular cells of the kidney (at protein level). Expression highly increases during chronic kidney disease and autosomal dominant polycystic kidney disease, where is detected in cysts.

Its subcellular location is the secreted. In kidney, has anti-inflammatory and anti-fibrotic properties by limiting the induction of chemokines, fibronectin and collagen expression in response to TGB1 and pro-inflammatory stimuli. The polypeptide is Matrix-remodeling-associated protein 5 (MXRA5) (Homo sapiens (Human)).